We begin with the raw amino-acid sequence, 611 residues long: tRNA uridine 5-carboxymethylaminomethyl modification enzyme MnmG (611 aa).

FAD is bound by residues 8-13, Val-120, and Ser-175; that span reads GAGHAG. Residue 268–282 participates in NAD(+) binding; sequence GPRYCPSIEDKIVRF. Gln-365 serves as a coordination point for FAD.

This sequence belongs to the MnmG family. In terms of assembly, homodimer. Heterotetramer of two MnmE and two MnmG subunits. The cofactor is FAD.

The protein resides in the cytoplasm. NAD-binding protein involved in the addition of a carboxymethylaminomethyl (cmnm) group at the wobble position (U34) of certain tRNAs, forming tRNA-cmnm(5)s(2)U34. This Mycoplasmoides gallisepticum (strain R(low / passage 15 / clone 2)) (Mycoplasma gallisepticum) protein is tRNA uridine 5-carboxymethylaminomethyl modification enzyme MnmG.